The primary structure comprises 317 residues: Malate dehydrogenase (317 aa).

Residues 15-20 (GSGNIG) and Asp-39 contribute to the NAD(+) site. Residues Arg-88 and Arg-94 each coordinate substrate. NAD(+)-binding positions include Asn-101 and 124-126 (VTN). Residues Asn-126 and Arg-157 each coordinate substrate. His-181 functions as the Proton acceptor in the catalytic mechanism.

Belongs to the LDH/MDH superfamily. MDH type 3 family.

It catalyses the reaction (S)-malate + NAD(+) = oxaloacetate + NADH + H(+). Functionally, catalyzes the reversible oxidation of malate to oxaloacetate. The protein is Malate dehydrogenase of Ehrlichia ruminantium (strain Gardel).